The chain runs to 212 residues: Urease accessory protein UreG 2 (212 aa).

11 to 18 serves as a coordination point for GTP; sequence GPVGSGKT.

It belongs to the SIMIBI class G3E GTPase family. UreG subfamily. In terms of assembly, homodimer. UreD, UreF and UreG form a complex that acts as a GTP-hydrolysis-dependent molecular chaperone, activating the urease apoprotein by helping to assemble the nickel containing metallocenter of UreC. The UreE protein probably delivers the nickel.

It localises to the cytoplasm. In terms of biological role, facilitates the functional incorporation of the urease nickel metallocenter. This process requires GTP hydrolysis, probably effectuated by UreG. The sequence is that of Urease accessory protein UreG 2 from Brucella abortus (strain 2308).